The primary structure comprises 132 residues: Nickel-responsive regulator (132 aa).

Positions 76, 87, 89, and 95 each coordinate Ni(2+).

It belongs to the transcriptional regulatory CopG/NikR family. Homotetramer. Requires Ni(2+) as cofactor.

Transcriptional repressor of the nikABCDE operon. Is active in the presence of excessive concentrations of intracellular nickel. The polypeptide is Nickel-responsive regulator (Klebsiella pneumoniae (strain 342)).